A 99-amino-acid chain; its full sequence is Regulatory protein FanB (99 aa).

In terms of biological role, trans-acting protein involved in the regulation of the biogenesis of K99 fimbriae (FanC). This chain is Regulatory protein FanB (fanB), found in Escherichia coli.